We begin with the raw amino-acid sequence, 579 residues long: MRNAQKSSGMPFHRYTPFQDQITVEMPDRTWPDKVITKAPRWCAVDLRDGNQALIDPMSPARKMKMFDLLVRMGYKEIEVGFPSASQTDFDFVRQLIEGNHIPDDVTIQVLTQAREHLIERTYESLVGAKQAIVHLYNSTSVLQRRVVFNQDEDGILDIALQGARLCRKYEETLADTHITYEYSPESFTGTELEYAVRVCNAVADVFEASADRQVIINLPATVEMATPNVYADSIEWMSRHLHPREGIILSLHPHNDRGTGVAAAELGYMAGADRIEGCLFGNGERTGNVDLVTLGLNLFVQGIDPMIDFSDIDDVRRTVEYCNQLPVPERSPYGGDLVFTAFSGSHQDAIKKGFEALERDAAAAGKDVADVTWQVPYLPVDPKDLGRSYEAVIRVNSQSGKGGVAYLLKNEHSLDLPRRAQIEFSGVIQRRTDTVGGEVSGAQLWQIFQDEYLPSGKADGQWGRYSLGSVKTETDDDGGMTLHASLTVDGAQVSRTGTGNGPIAALLNILTQDGVDVRVLDYSEHALSEGGNAMAAAYVECAVGERVLWGVGIDANTSMSSLKAVISAVNRAIRDAQS.

Residues 40–314 form the Pyruvate carboxyltransferase domain; that stretch reads PRWCAVDLRD…DPMIDFSDID (275 aa). Residues D49, H253, H255, and N289 each contribute to the Mg(2+) site. The interval 456–579 is regulatory domain; that stretch reads SGKADGQWGR…VNRAIRDAQS (124 aa).

Belongs to the alpha-IPM synthase/homocitrate synthase family. LeuA type 2 subfamily. Homodimer. Mg(2+) is required as a cofactor.

Its subcellular location is the cytoplasm. It carries out the reaction 3-methyl-2-oxobutanoate + acetyl-CoA + H2O = (2S)-2-isopropylmalate + CoA + H(+). It participates in amino-acid biosynthesis; L-leucine biosynthesis; L-leucine from 3-methyl-2-oxobutanoate: step 1/4. Functionally, catalyzes the condensation of the acetyl group of acetyl-CoA with 3-methyl-2-oxobutanoate (2-ketoisovalerate) to form 3-carboxy-3-hydroxy-4-methylpentanoate (2-isopropylmalate). In Pseudarthrobacter chlorophenolicus (strain ATCC 700700 / DSM 12829 / CIP 107037 / JCM 12360 / KCTC 9906 / NCIMB 13794 / A6) (Arthrobacter chlorophenolicus), this protein is 2-isopropylmalate synthase.